Here is a 251-residue protein sequence, read N- to C-terminus: Protein crossbronx (251 aa).

Positions 20–176 (QQEYKILAEY…TRENIRESLA (157 aa)) constitute a UBC core domain. The interval 211 to 251 (QSKHLESQSQQSNNGGNGGGGGAATGLSWVKEGEFKPLSVE) is disordered. Residues 225 to 234 (GGNGGGGGAA) show a composition bias toward gly residues.

It belongs to the ubiquitin-conjugating enzyme family. FTS subfamily.

The polypeptide is Protein crossbronx (cbx) (Drosophila willistoni (Fruit fly)).